The sequence spans 45 residues: Thymosin beta (45 aa).

Residues 1-45 (MADKPNMTEITSFDKTKLRKTETQEKNPLPTKETIEQERQGESTP) are disordered. 2 stretches are compositionally biased toward basic and acidic residues: residues 12-25 (SFDK…ETQE) and 33-45 (ETIE…ESTP).

Belongs to the thymosin beta family.

The protein localises to the cytoplasm. It localises to the cytoskeleton. Plays an important role in the organization of the cytoskeleton. Binds to and sequesters actin monomers (G actin) and therefore inhibits actin polymerization. This Danio rerio (Zebrafish) protein is Thymosin beta (tmsb).